The primary structure comprises 515 residues: NADH-quinone oxidoreductase subunit N (515 aa).

14 consecutive transmembrane segments (helical) span residues 14–34, 40–60, 80–100, 138–158, 160–180, 195–215, 239–259, 271–291, 307–327, 333–353, 361–381, 404–424, 438–458, and 485–505; these read ITPI…EAFL, WSAQ…ALAL, APTL…ILLI, TEVF…CAAN, LLTM…MCGL, YFLL…LLYG, LFAG…VGPF, PTAV…GGIL, GVLY…GLTQ, MIAY…IALT, MFYL…ISLV, VAWV…TSGF, GMAP…FFYL, and AAIT…SLAL.

The protein belongs to the complex I subunit 2 family. NDH-1 is composed of 14 different subunits. Subunits NuoA, H, J, K, L, M, N constitute the membrane sector of the complex.

It is found in the cell membrane. The enzyme catalyses a quinone + NADH + 5 H(+)(in) = a quinol + NAD(+) + 4 H(+)(out). In terms of biological role, NDH-1 shuttles electrons from NADH, via FMN and iron-sulfur (Fe-S) centers, to quinones in the respiratory chain. The immediate electron acceptor for the enzyme in this species is believed to be a menaquinone. Couples the redox reaction to proton translocation (for every two electrons transferred, four hydrogen ions are translocated across the cytoplasmic membrane), and thus conserves the redox energy in a proton gradient. The chain is NADH-quinone oxidoreductase subunit N from Saccharopolyspora erythraea (strain ATCC 11635 / DSM 40517 / JCM 4748 / NBRC 13426 / NCIMB 8594 / NRRL 2338).